Here is a 410-residue protein sequence, read N- to C-terminus: Lissencephaly-1 homolog B (410 aa).

The LisH domain maps to 7–39 (QRDELNRAIADYLRSNGYEEAYSTFKKEAELDM). Positions 56-82 (TSVIRLQKKVMELESKLNEAKEEITLG) form a coiled coil. WD repeat units follow at residues 106–147 (GHRS…RTLK), 148–187 (GHTDSVQDISFDQTGKLLASCSADMTIKLWDFQGFECIRT), 190–229 (GHDHNVSSVAIMPNGDHIVSASRDKTIKMWEVATGYCVKT), 232–271 (GHREWVRMVRPNQDGSLIASCSNDQTVRVWVATSKECKAE), 274–333 (EHEH…CLMT), 336–375 (GHDNWVRGVLVHPGGRFIVSCADDKTLRIWDYKNKRCMKT), and 378–410 (AHEHFVTSLDMHQTAPYVVTGSVDQTVKVWECR).

Belongs to the WD repeat LIS1/nudF family. As to quaternary structure, can self-associate. Component of the cytosolic PAF-AH (I) heterotetrameric enzyme, which is composed of PAFAH1B1 (beta), PAFAH1B2 (alpha2) and PAFAH1B3 (alpha1) subunits. The catalytic activity of the enzyme resides in the alpha1 (PAFAH1B3) and alpha2 (PAFAH1B2) subunits, whereas the beta subunit (PAFAH1B1) has regulatory activity. Trimer formation is not essential for the catalytic activity. Interacts with dynein, dynactin, nde1 and ndel1.

Its subcellular location is the cytoplasm. The protein resides in the cytoskeleton. It is found in the microtubule organizing center. The protein localises to the centrosome. Functionally, regulatory subunit (beta subunit) of the cytosolic type I platelet-activating factor (PAF) acetylhydrolase (PAF-AH (I)), an enzyme that catalyzes the hydrolyze of the acetyl group at the sn-2 position of PAF and its analogs and participates in PAF inactivation. Regulates the PAF-AH (I) activity in a catalytic dimer composition-dependent manner. Positively regulates the activity of the minus-end directed microtubule motor protein dynein. May enhance dynein-mediated microtubule sliding by targeting dynein to the microtubule plus end. Required for several dynein- and microtubule-dependent processes such as the maintenance of Golgi integrity, the peripheral transport of microtubule fragments and the coupling of the nucleus and centrosome. May be required for proliferation of neuronal precursors and neuronal migration. In Salmo salar (Atlantic salmon), this protein is Lissencephaly-1 homolog B (pafah1b1-2).